The sequence spans 78 residues: RNA-binding protein Hfq (78 aa).

Residues 10–69 (DPFLNALRKEHVPVSIYLVNGIKLQGHIESFDQYVVLLRNTVTQMVYKHAISTVVPARAV) form the Sm domain.

It belongs to the Hfq family. As to quaternary structure, homohexamer.

Functionally, RNA chaperone that binds small regulatory RNA (sRNAs) and mRNAs to facilitate mRNA translational regulation in response to envelope stress, environmental stress and changes in metabolite concentrations. Also binds with high specificity to tRNAs. This chain is RNA-binding protein Hfq, found in Herminiimonas arsenicoxydans.